Here is an 80-residue protein sequence, read N- to C-terminus: Exodeoxyribonuclease 7 small subunit (80 aa).

It belongs to the XseB family. In terms of assembly, heterooligomer composed of large and small subunits.

The protein resides in the cytoplasm. It carries out the reaction Exonucleolytic cleavage in either 5'- to 3'- or 3'- to 5'-direction to yield nucleoside 5'-phosphates.. Its function is as follows. Bidirectionally degrades single-stranded DNA into large acid-insoluble oligonucleotides, which are then degraded further into small acid-soluble oligonucleotides. This chain is Exodeoxyribonuclease 7 small subunit, found in Pseudomonas fluorescens (strain SBW25).